The following is a 204-amino-acid chain: Leucyl/phenylalanyl-tRNA--protein transferase (204 aa).

The protein belongs to the L/F-transferase family.

It localises to the cytoplasm. The catalysed reaction is N-terminal L-lysyl-[protein] + L-leucyl-tRNA(Leu) = N-terminal L-leucyl-L-lysyl-[protein] + tRNA(Leu) + H(+). The enzyme catalyses N-terminal L-arginyl-[protein] + L-leucyl-tRNA(Leu) = N-terminal L-leucyl-L-arginyl-[protein] + tRNA(Leu) + H(+). It catalyses the reaction L-phenylalanyl-tRNA(Phe) + an N-terminal L-alpha-aminoacyl-[protein] = an N-terminal L-phenylalanyl-L-alpha-aminoacyl-[protein] + tRNA(Phe). Functions in the N-end rule pathway of protein degradation where it conjugates Leu, Phe and, less efficiently, Met from aminoacyl-tRNAs to the N-termini of proteins containing an N-terminal arginine or lysine. In Rhizobium meliloti (strain 1021) (Ensifer meliloti), this protein is Leucyl/phenylalanyl-tRNA--protein transferase.